A 245-amino-acid polypeptide reads, in one-letter code: DNA polymerase sliding clamp 2 (245 aa).

The protein belongs to the PCNA family. In terms of assembly, forms homodimers with PCNA1, which then recruit PCNA3; does not form homotrimers. The heterodimers interact with RfcS homotetramers. Heterotrimer which circularizes head-to-tail (head is at N-terminus, tail is at C-terminus) to form a toroid; DNA passes through its center. Replication factor C (RFC) is required to load the toroid on the DNA. This subunit interacts with DNA polymerase I (dpo1). The heterotrimer also interacts with flap endonuclease 1, DNA ligase and XPF via the other subunits.

Its function is as follows. One of the sliding clamp subunits that acts as a moving platform for DNA processing. Responsible for tethering the catalytic subunit of DNA polymerase to DNA during high-speed replication. Heterotrimer stimulates the Holliday junction resolvase Hjc. DNA polymerase I, DNA ligase and the flap endonuclease may be constitutively associated with the PCNA heterotrimer forming a scanning complex able to couple DNA synthesis and Okazaki fragment maturation. This chain is DNA polymerase sliding clamp 2, found in Saccharolobus solfataricus (strain ATCC 35092 / DSM 1617 / JCM 11322 / P2) (Sulfolobus solfataricus).